An 826-amino-acid chain; its full sequence is Breast cancer anti-estrogen resistance protein 3 homolog (826 aa).

The residue at position 2 (alanine 2) is an N-acetylalanine. A phosphoserine mark is found at serine 32, serine 78, serine 83, and serine 182. Positions 46–81 (SIHGTLPRKKKGPPPIRSCDNFSHVGTLPHSRSPRH) are disordered. Residues 154-253 (WYHGRIPRQV…QSGAIIFQPV (100 aa)) form the SH2 domain. Residues 268–287 (ASSPDRAHEGSLTEGRPDAA) are disordered. Serine 291 carries the phosphoserine modification. Residues 294-321 (VGGTQAREQGLPRGNLLRNKEKSGSQPA) are disordered. Lysine 335 carries the post-translational modification N6-methyllysine. The interval 348-406 (KLTPQSPSVGTSPCPNSPVFRTGSEPTLSPAVVRRVSSDARPGEALRGSDSQLCPKPPP) is disordered. A compositionally biased stretch (polar residues) spans 350-361 (TPQSPSVGTSPC). A phosphoserine mark is found at serine 359, serine 364, serine 376, and serine 472. Residues 480–501 (DDDDRTRPWKPPPAPGDTVGED) are disordered. A Ras-GEF domain is found at 549-819 (DPKVIAQHLL…TALSRKLEPP (271 aa)). Positions 745–749 (LATAR) are mediates the interaction with BCAR1/p130CAS.

Part of a complex comprised of PTPRA, BCAR1, BCAR3 (via SH2 domain) and SRC; the formation of the complex is dependent on integrin mediated-tyrosine phosphorylation of PTPRA. Within the complex, interacts (via SH2 domain) with PTPRA (when phosphorylated on 'Tyr-797'). Interacts (via Ras-GEF domain) with BCAR1. Interacts (via Ras-GEF domain) with NEDD9. Interacts with PTK2/FAK1. Interacts with PTPN1. Interacts (via SH2 domain) with EGFR (when tyrosine-phosphorylated). Phosphorylated on tyrosine residues.

The protein localises to the cytoplasm. It is found in the cell junction. It localises to the focal adhesion. Acts as an adapter protein downstream of several growth factor receptors to promote cell proliferation, migration, and redistribution of actin fibers. Specifically involved in INS/insulin signaling pathway by mediating MAPK1/ERK2-MAPK3/ERK1 activation and DNA synthesis. Promotes insulin-mediated membrane ruffling. In response to vasoconstrictor peptide EDN1, involved in the activation of RAP1 downstream of PTK2B via interaction with phosphorylated BCAR1. Inhibits cell migration and invasion via regulation of TGFB-mediated matrix digestion, actin filament rearrangement, and inhibition of invadopodia activity. May inhibit TGFB-SMAD signaling, via facilitating BCAR1 and SMAD2 and/or SMAD3 interaction. Regulates EGF-induced DNA synthesis. Required for the maintenance of ocular lens morphology and structural integrity, potentially via regulation of focal adhesion complex signaling. Acts upstream of PTPRA to regulate the localization of BCAR1 and PTPRA to focal adhesions, via regulation of SRC-mediated phosphorylation of PTPRA. Positively regulates integrin-induced tyrosine phosphorylation of BCAR1. Acts as a guanine nucleotide exchange factor (GEF) for small GTPases RALA, RAP1A and RRAS. However, in a contrasting study, lacks GEF activity towards RAP1. This chain is Breast cancer anti-estrogen resistance protein 3 homolog (BCAR3), found in Bos taurus (Bovine).